A 1673-amino-acid chain; its full sequence is MILKSFLLGNLVSLCMKIINSVVVVGLYYGFLTTFSIGPSYLFLLRAHIMEEGEEGTEKKVSATTGFITGQLIMFISIYYAPLHLALGRPHTITVLALPYLLFHFFCNTHKHFFDYGSTNRNSMRNLSIQCVFLNNLIFQLFNHFILPSSMLARLVNIFMFQCNNKIIFVTSSFVGWIIGHIILMKSIGLLVVWIRKNRSIRKYIRSNKSFVSELANSMSIAGILNILLFVTCVYYLGRMPLPIINKKLNNLEKMDQAKLKNNTPLSYIYKNQEDLYLEILGKKDKEKSFSLFEKPILTFFFDYNRWNRPLRYIRKINKNLSVRKETSQYFFYTCQSDGKKRISFTYPPSLSTFGEMIARRISLSTLEKLSADALYTEWLYTNKEKNNNLNNEFINRIEALETVFLSINILDTKTRLCNVETEKKKNCLVNKKNYLVKMDDPFLTGMYRGRINKLFSSSIINQISIENYEKTYELNKIHYNLLPYPNSREYEHKIDPNSPDYEQKIEKLEKIQAQIDLNNRFIFLWTTIIAKLKGQKNSSRINEIGKKPPRWSYKLINELHQNYKKRRKEQGIIQGLRHQLRTRKYKHIYFLNRSTRTLETLKQSNLNNSNMDKKFNNKDLGFISYLEEPDFRRSLIKGSMRAQRRKLVIWGPYQGNPHSPLFLEKKQDFPFPISDLIKLFLNIKDRLGKKSEFEILNKQSPPKRNNQEDVMEFWETIPHGHKTRGILLLAQSTFRKYIKLPLLIIAKNIVRILLRQSPEWDEDFQDWNREIYLKCSSNGLQFSKTKFPKNWLRGGFQIKILYPFHLKPWHRSKLRLYDSDRDLKQQEDFDSCFLTVLGMETEHPFGPPRKTPSFFEPIFKDIDYKVEIRKLNFRVRRIFKKIKKKEAKAFFFIKQKIKELLKGNKIPLFLPREIYESSETQTEKDSIISNQIIHESLSQIRSTGWTNYSQAEEEMKHRIDRRKTIRNEIEIMKKNKINNAESSQKILKILKIKNIELLVKFFIEKIYIEIFLCIINMRRIPLQLFIQSTKKIIDNDKYINNNETNQERINKTKQNKIDFILSMTIKRAFDNLRNSKRKSDIFFDLSYLSQKYVFFKLSQTQIINFNKLRSILQYNGPSFCLKTEIKDFFGRQGIFHSELRHNKLPNYGMNPWKNWLRGHYQYDLSQITSSRLIPQKWRNRINQCQTSQNKDLNKWYSSEKDQLLDSKKKQNSKVYLLPNKEDNLKKNYRYDLLSYKYIHSETKKNYYIYRSSLETNNNQENSTRNKEKFFSILKNIPSKNYLGKSDIIYMEKNKDRKFLYKINKNIKVEPNKDQIKDKNKDQKKDKIHNNGLFYLPIDSNLEINYKKVFFDWMGMNEKILILNCLISNPKVFFFPKFVRLYHKYKEKPWFIPSKLLLFNLNITSNFSENQNINGKQEEYFLKQEEYFLKQEEDFLKQEEDFLKQEEDFLKQEEDFLKQEEDFFKFRPSNSKQYFELNNQNNIEEYFLESTEKLKIFLKGDFPLQLRWAGRVNQLNQKIMNNIQIYGLLLSLINVRKITISYIQRKEMDLGIMSRNLNLTQLMKTGILILEPARLSLKNDGQFFMYQIISISLVHKSKYQSNQRYQKQENVAKNIDKKNSDLLVPEKILSSRRRRELRILISFNLNLKNNTGVDRNTLVYNENKIKKMESIFG.

Transmembrane regions (helical) follow at residues 18 to 38 (IINSVVVVGLYYGFLTTFSIG), 67 to 87 (FITGQLIMFISIYYAPLHLAL), 90 to 110 (PHTITVLALPYLLFHFFCNTH), 127 to 147 (LSIQCVFLNNLIFQLFNHFIL), 175 to 195 (VGWIIGHIILMKSIGLLVVWI), and 218 to 238 (SMSIAGILNILLFVTCVYYLG).

Belongs to the TIC214 family. Part of the Tic complex.

It is found in the plastid. The protein localises to the chloroplast inner membrane. Functionally, involved in protein precursor import into chloroplasts. May be part of an intermediate translocation complex acting as a protein-conducting channel at the inner envelope. The sequence is that of Protein TIC 214 from Lactuca sativa (Garden lettuce).